The following is a 355-amino-acid chain: Phosphoribosylformylglycinamidine cyclo-ligase (355 aa).

This sequence belongs to the AIR synthase family.

Its subcellular location is the cytoplasm. The enzyme catalyses 2-formamido-N(1)-(5-O-phospho-beta-D-ribosyl)acetamidine + ATP = 5-amino-1-(5-phospho-beta-D-ribosyl)imidazole + ADP + phosphate + H(+). The protein operates within purine metabolism; IMP biosynthesis via de novo pathway; 5-amino-1-(5-phospho-D-ribosyl)imidazole from N(2)-formyl-N(1)-(5-phospho-D-ribosyl)glycinamide: step 2/2. The sequence is that of Phosphoribosylformylglycinamidine cyclo-ligase from Paraburkholderia xenovorans (strain LB400).